We begin with the raw amino-acid sequence, 155 residues long: Telokin-like protein 20 homolog (155 aa).

The interval 109-155 (KRAVAPPHHEPEPVPAEEGAVADRAEPESGDAPPSPKKQKLDEREQD) is disordered.

This is Telokin-like protein 20 homolog from Orgyia pseudotsugata multicapsid polyhedrosis virus (OpMNPV).